A 225-amino-acid chain; its full sequence is Thaumatin-like protein (225 aa).

The first 24 residues, 1–24 (MSTFKSLSLSALLFIAFLFTCARG), serve as a signal peptide directing secretion. 8 disulfides stabilise this stretch: cysteine 33–cysteine 224, cysteine 74–cysteine 84, cysteine 89–cysteine 95, cysteine 140–cysteine 213, cysteine 146–cysteine 196, cysteine 154–cysteine 164, cysteine 168–cysteine 177, and cysteine 178–cysteine 183.

The protein belongs to the thaumatin family. In terms of processing, N-glycosylated.

It is found in the secreted. Has antifungal activity against B.cinerea, C.comatus, M.arachidicola, P.piricola, C.albicans and S.carlsbergensis. Inhibits HIV-1 reverse transcriptase. This is Thaumatin-like protein from Actinidia chinensis var. chinensis (Chinese soft-hair kiwi).